Consider the following 206-residue polypeptide: MRKLKKEQREALEKVVSLGICNDFYLAGGTALLIRYGHRFSDDFDFFTFPEKPFDSFSISRQIDKLSRVRWLYQSKDTLIFLLDGIKFSFFEYRYPLLENPEKNNDLGIFIAGDKDIACMKAVAIAQRGSKKDFYDLWFLMRKHGWDLKELEKLVKKKYRNIDFSIIVKSLVYFEDAREEVYEDIEPYWEEVEEFFKRKVKEYLEN.

This is an uncharacterized protein from Aquifex aeolicus (strain VF5).